The sequence spans 175 residues: ATP synthase subunit b (175 aa).

A helical membrane pass occupies residues 20 to 40 (LIFWTAITFVIVLLILKKIAW).

Belongs to the ATPase B chain family. F-type ATPases have 2 components, F(1) - the catalytic core - and F(0) - the membrane proton channel. F(1) has five subunits: alpha(3), beta(3), gamma(1), delta(1), epsilon(1). F(0) has four main subunits: a(1), b(2) and c(10-14). The alpha and beta chains form an alternating ring which encloses part of the gamma chain. F(1) is attached to F(0) by a central stalk formed by the gamma and epsilon chains, while a peripheral stalk is formed by the delta and b chains.

It is found in the cell inner membrane. Its function is as follows. F(1)F(0) ATP synthase produces ATP from ADP in the presence of a proton or sodium gradient. F-type ATPases consist of two structural domains, F(1) containing the extramembraneous catalytic core and F(0) containing the membrane proton channel, linked together by a central stalk and a peripheral stalk. During catalysis, ATP synthesis in the catalytic domain of F(1) is coupled via a rotary mechanism of the central stalk subunits to proton translocation. In terms of biological role, component of the F(0) channel, it forms part of the peripheral stalk, linking F(1) to F(0). This Pelodictyon phaeoclathratiforme (strain DSM 5477 / BU-1) protein is ATP synthase subunit b.